The primary structure comprises 266 residues: Zinc transporter ZupT (266 aa).

8 helical membrane passes run 8 to 28, 36 to 56, 71 to 91, 123 to 143, 152 to 172, 185 to 205, 209 to 229, and 246 to 266; these read LLLTLLAGLSTGIGSAMALAV, LALSLGFSAGIMLYVSFMEII, AGAWVSTISFFGGMLFTWAID, GIFTAAAIAIHNFPEGMAVFF, GIVIASTIALHNIPEGMAVAV, FSLSFLSGLAEPLGALVGYTL, FLTPFVLGIVLASVSGIMVYI, and LAITGLIAGMAVMALSLLLLT. Fe(2+)-binding residues include asparagine 134 and glutamate 137. Glutamate 137 and histidine 162 together coordinate Zn(2+). Fe(2+) is bound by residues asparagine 163, glutamate 166, and glutamate 195. Glutamate 166 provides a ligand contact to Zn(2+).

It belongs to the ZIP transporter (TC 2.A.5) family. ZupT subfamily.

Its subcellular location is the cell inner membrane. It carries out the reaction Zn(2+)(in) = Zn(2+)(out). Functionally, mediates zinc uptake. May also transport other divalent cations. The sequence is that of Zinc transporter ZupT from Chlorobium luteolum (strain DSM 273 / BCRC 81028 / 2530) (Pelodictyon luteolum).